A 73-amino-acid polypeptide reads, in one-letter code: Large ribosomal subunit protein bL31 (73 aa).

Residues Cys16, Cys18, Cys38, and Cys41 each contribute to the Zn(2+) site.

It belongs to the bacterial ribosomal protein bL31 family. Type A subfamily. As to quaternary structure, part of the 50S ribosomal subunit. The cofactor is Zn(2+).

In terms of biological role, binds the 23S rRNA. The chain is Large ribosomal subunit protein bL31 from Vibrio parahaemolyticus serotype O3:K6 (strain RIMD 2210633).